A 227-amino-acid polypeptide reads, in one-letter code: UPF0441 protein YPO0661/y3517/YP_2976 (227 aa).

Positions 198-227 are disordered; sequence GGFGESVAKQSSMQRSAATSSKTTTRSMGG. Residues 212–227 show a composition bias toward low complexity; sequence RSAATSSKTTTRSMGG.

It belongs to the UPF0441 family.

This chain is UPF0441 protein YPO0661/y3517/YP_2976, found in Yersinia pestis.